Consider the following 409-residue polypeptide: MDKLLERFLHYVSLDTQSKSGVRQVPSTEGQWKLLRLLKQQLEEMGLVNITLSEKGTLMATLPANVEGDIPAIGFISHVDTSPDFSGKNVNPQIVENYRGGDIALGIGDEVLSPVMFPVLHQLLGQTLVTTDGKTLLGADDKAGVAEIMTALAVLKGNPIPHGDIKVAFTPDEEVGKGAKHFDVEEFGAQWAYTVDGGGVGELEFENFNAASVNIKIVGNNVHPGTAKGVMVNALSLAARIHAEVPADEAPETTEGYEGFYHLASMKGTVDRAEMHYIIRDFDRKQFEARKRKMMEIAKKVGKGLHPDCYIELVIEDSYYNMREKVVEHPHILDIAQQAMRDCHITPEMKPIRGGTDGAQLSFMGLPCPNLFTGGYNYHGKHEFVTLEGMEKAVQVIVRIAELTAKRGQ.

His-78 lines the Zn(2+) pocket. Asp-80 is an active-site residue. Asp-140 contacts Zn(2+). Glu-173 (proton acceptor) is an active-site residue. Zn(2+)-binding residues include Glu-174, Asp-196, and His-379.

It belongs to the peptidase M20B family. The cofactor is Zn(2+).

Its subcellular location is the cytoplasm. It catalyses the reaction Release of the N-terminal residue from a tripeptide.. Cleaves the N-terminal amino acid of tripeptides. The chain is Peptidase T from Salmonella dublin (strain CT_02021853).